The primary structure comprises 409 residues: Isovaleryl-CoA dehydrogenase, mitochondrial (409 aa).

Residues 1–22 (MQRFFSARSILGYAVKTRRRSF) constitute a mitochondrion transit peptide. Residues 151–160 (LAMSEPNAGS) and 184–186 (WCT) each bind FAD. Substrate is bound at residue Ser-160. Substrate-binding positions include 206 to 207 (SK), Tyr-261, and 268 to 271 (DLER). Glu-270 acts as the Proton acceptor in catalysis. Residues Arg-296, Gln-307, and 364 to 368 (QCLGG) each bind FAD. 391-392 (AG) is a binding site for substrate. 393–395 (TSE) serves as a coordination point for FAD.

The protein belongs to the acyl-CoA dehydrogenase family. In terms of assembly, homodimer. The cofactor is FAD. Expressed in leaves, stems and flowers. Not detected in roots.

It is found in the mitochondrion. The enzyme catalyses 3-methylbutanoyl-CoA + oxidized [electron-transfer flavoprotein] + H(+) = 3-methylbut-2-enoyl-CoA + reduced [electron-transfer flavoprotein]. It functions in the pathway amino-acid degradation; L-leucine degradation; (S)-3-hydroxy-3-methylglutaryl-CoA from 3-isovaleryl-CoA: step 1/3. In terms of biological role, involved in degradation of the branched-chain amino acids, phytol and lysine for the supply of carbon and electrons to the ETF/ETFQO complex during dark-induced sugar starvation. This chain is Isovaleryl-CoA dehydrogenase, mitochondrial (IVD), found in Arabidopsis thaliana (Mouse-ear cress).